We begin with the raw amino-acid sequence, 100 residues long: Small ribosomal subunit protein uS14 (100 aa).

The protein belongs to the universal ribosomal protein uS14 family. As to quaternary structure, part of the 30S ribosomal subunit. Contacts proteins S3 and S10.

Its function is as follows. Binds 16S rRNA, required for the assembly of 30S particles and may also be responsible for determining the conformation of the 16S rRNA at the A site. This chain is Small ribosomal subunit protein uS14, found in Prochlorococcus marinus (strain NATL1A).